We begin with the raw amino-acid sequence, 438 residues long: Chaperone SurA (438 aa).

The first 28 residues, methionine 1 to alanine 28, serve as a signal peptide directing secretion. 2 consecutive PpiC domains span residues glutamate 181–serine 282 and valine 292–glutamate 390.

Its subcellular location is the periplasm. The catalysed reaction is [protein]-peptidylproline (omega=180) = [protein]-peptidylproline (omega=0). Functionally, chaperone involved in the correct folding and assembly of outer membrane proteins. Recognizes specific patterns of aromatic residues and the orientation of their side chains, which are found more frequently in integral outer membrane proteins. May act in both early periplasmic and late outer membrane-associated steps of protein maturation. This chain is Chaperone SurA, found in Dechloromonas aromatica (strain RCB).